The sequence spans 463 residues: Fumarate hydratase class II (463 aa).

Residues 98–100 (SGT), 129–132 (HPND), 139–141 (SSN), and Thr-187 contribute to the substrate site. His-188 functions as the Proton donor/acceptor in the catalytic mechanism. Ser-318 is a catalytic residue. Residues Ser-319 and 324–326 (KVN) contribute to the substrate site.

Belongs to the class-II fumarase/aspartase family. Fumarase subfamily. Homotetramer.

It localises to the cytoplasm. It catalyses the reaction (S)-malate = fumarate + H2O. It functions in the pathway carbohydrate metabolism; tricarboxylic acid cycle; (S)-malate from fumarate: step 1/1. In terms of biological role, involved in the TCA cycle. Catalyzes the stereospecific interconversion of fumarate to L-malate. The protein is Fumarate hydratase class II of Brucella melitensis biotype 1 (strain ATCC 23456 / CCUG 17765 / NCTC 10094 / 16M).